A 142-amino-acid chain; its full sequence is Hemoglobin subunit alpha (142 aa).

Residues 2 to 142 (VLSPADKSNV…VSTVLTSKYR (141 aa)) form the Globin domain. The residue at position 4 (Ser-4) is a Phosphoserine. An N6-succinyllysine mark is found at Lys-8 and Lys-12. The residue at position 17 (Lys-17) is an N6-acetyllysine; alternate. Position 17 is an N6-succinyllysine; alternate (Lys-17). Tyr-25 carries the phosphotyrosine modification. At Ser-36 the chain carries Phosphoserine. An N6-succinyllysine modification is found at Lys-41. Position 50 is a phosphoserine (Ser-50). His-59 is an O2 binding site. Position 88 (His-88) interacts with heme b. Phosphoserine is present on Ser-103. The residue at position 109 (Thr-109) is a Phosphothreonine. Ser-125 and Ser-132 each carry phosphoserine. Residues Thr-135 and Thr-138 each carry the phosphothreonine modification. Ser-139 carries the phosphoserine modification.

Belongs to the globin family. Heterotetramer of two alpha chains and two beta chains. As to expression, red blood cells.

In terms of biological role, involved in oxygen transport from the lung to the various peripheral tissues. Its function is as follows. Hemopressin acts as an antagonist peptide of the cannabinoid receptor CNR1. Hemopressin-binding efficiently blocks cannabinoid receptor CNR1 and subsequent signaling. The chain is Hemoglobin subunit alpha (HBA) from Ateles geoffroyi (Black-handed spider monkey).